The chain runs to 378 residues: 3,6-diketocamphane 1,6-monooxygenase (378 aa).

Residues histidine 10, serine 44, methionine 76, and 201-209 contribute to the FMN site; that span reads TGFSYNSPS.

This sequence belongs to the bacterial luciferase oxidoreductase family. As to quaternary structure, homodimer. Likely forms a loose transient complex with a P.putida flavin reductase that provides the required FMNH(2) to the enzyme.

The catalysed reaction is (1S,4S)-bornane-2,5-dione + FMNH2 + O2 = (1S,4S)-5-oxo-1,2-campholide + FMN + H2O + H(+). Involved in the degradation and assimilation of (-)-camphor, which allows P.putida strain NCIMB 10007 to grow on this enantiomer of camphor as the sole carbon source. Catalyzes the FMNH(2)-dependent lactonization of 3,6-diketocamphane via a Baeyer-Villiger oxidation to produce the unstable lactone 5-oxo-1,2-campholide with (S,S) configuration, that presumably undergoes spontaneous hydrolysis to form 2-oxo-Delta(3)-4,5,5-trimethylcyclopentenylacetate. Is also able to convert (-)-camphor to the corresponding lactone in vitro. Shows no conversion of (+)-camphor, (+)-fenchone, (-)-fenchone, and (+)-nopinone. Acts on other bicyclic ketones but very poorly on a few 2- and 4-substituted monocyclic ketones. This chain is 3,6-diketocamphane 1,6-monooxygenase, found in Pseudomonas putida (Arthrobacter siderocapsulatus).